The chain runs to 665 residues: Coiled-coil domain-containing protein 138 (665 aa).

Phosphothreonine is present on T48. S49 is modified (phosphoserine). The stretch at 198-323 (QQKFAEELQK…YEFMTIQRLK (126 aa)) forms a coiled coil. S469 carries the phosphoserine modification.

The polypeptide is Coiled-coil domain-containing protein 138 (CCDC138) (Macaca fascicularis (Crab-eating macaque)).